The chain runs to 97 residues: Small ribosomal subunit protein bS20 (97 aa).

Belongs to the bacterial ribosomal protein bS20 family.

Its function is as follows. Binds directly to 16S ribosomal RNA. The protein is Small ribosomal subunit protein bS20 of Methylibium petroleiphilum (strain ATCC BAA-1232 / LMG 22953 / PM1).